We begin with the raw amino-acid sequence, 323 residues long: Cysteine synthase A (323 aa).

Asparagine 8 and arginine 35 together coordinate hydrogen sulfide. Lysine 42 carries the N6-(pyridoxal phosphate)lysine modification. Pyridoxal 5'-phosphate-binding positions include asparagine 72 and 177–181; that span reads GTGGT. Leucine 269 is a hydrogen sulfide binding site. Serine 273 is a pyridoxal 5'-phosphate binding site.

Belongs to the cysteine synthase/cystathionine beta-synthase family. In terms of assembly, homodimer. Pyridoxal 5'-phosphate serves as cofactor.

The catalysed reaction is O-acetyl-L-serine + hydrogen sulfide = L-cysteine + acetate. It functions in the pathway amino-acid biosynthesis; L-cysteine biosynthesis; L-cysteine from L-serine: step 2/2. The protein is Cysteine synthase A (cysK) of Escherichia coli O157:H7.